Consider the following 440-residue polypeptide: Suppressor of cytokine signaling 4 (440 aa).

Positions 1–11 are enriched in polar residues; it reads MAENSESNSKN. The disordered stretch occupies residues 1-29; it reads MAENSESNSKNVDVRPKTSRSRSADRKDG. A compositionally biased stretch (basic and acidic residues) spans 12-29; sequence VDVRPKTSRSRSADRKDG. Residues 286–381 enclose the SH2 domain; that stretch reads CYWGVMDKYA…FFEPLLSTPL (96 aa). Positions 376 to 425 constitute an SOCS box domain; sequence LLSTPLIRTFPFSLQHICRTVICNCTTYDGIDALPIPSSMKLYLKEYHYK.

The protein operates within protein modification; protein ubiquitination. Its function is as follows. SOCS family proteins form part of a classical negative feedback system that regulates cytokine signal transduction. Substrate-recognition component of a SCF-like ECS (Elongin BC-CUL2/5-SOCS-box protein) E3 ubiquitin-protein ligase complex which mediates the ubiquitination and subsequent proteasomal degradation of target proteins. Inhibits EGF signaling by mediating the degradation of the Tyr-phosphorylated EGF receptor/EGFR. This is Suppressor of cytokine signaling 4 (SOCS4) from Bos taurus (Bovine).